A 163-amino-acid polypeptide reads, in one-letter code: RNA pyrophosphohydrolase (163 aa).

Residues 6 to 149 (GYRLNVGIVI…KRDVYRQVMK (144 aa)) form the Nudix hydrolase domain. The short motif at 38–59 (GGIHLTESPEEAMYRELFEELG) is the Nudix box element.

Belongs to the Nudix hydrolase family. RppH subfamily. A divalent metal cation is required as a cofactor.

Accelerates the degradation of transcripts by removing pyrophosphate from the 5'-end of triphosphorylated RNA, leading to a more labile monophosphorylated state that can stimulate subsequent ribonuclease cleavage. This Hamiltonella defensa subsp. Acyrthosiphon pisum (strain 5AT) protein is RNA pyrophosphohydrolase.